A 461-amino-acid polypeptide reads, in one-letter code: Trigger factor (461 aa).

One can recognise a PPIase FKBP-type domain in the interval 169–256 (GDTAVIDFAG…LKDLKIKELP (88 aa)). Residues 432–461 (PGEAIEPGSGEDAPPEVAAGATEPEAQPNS) are disordered.

Belongs to the FKBP-type PPIase family. Tig subfamily.

It is found in the cytoplasm. It carries out the reaction [protein]-peptidylproline (omega=180) = [protein]-peptidylproline (omega=0). In terms of biological role, involved in protein export. Acts as a chaperone by maintaining the newly synthesized protein in an open conformation. Functions as a peptidyl-prolyl cis-trans isomerase. The protein is Trigger factor of Gloeobacter violaceus (strain ATCC 29082 / PCC 7421).